The primary structure comprises 510 residues: Maturase K (510 aa).

The protein belongs to the intron maturase 2 family. MatK subfamily.

The protein resides in the plastid. The protein localises to the chloroplast. Usually encoded in the trnK tRNA gene intron. Probably assists in splicing its own and other chloroplast group II introns. This Taxus cuspidata (Japanese yew) protein is Maturase K.